A 503-amino-acid polypeptide reads, in one-letter code: MIEKDKRTIAFIHPDLGIGGAERLVVDAALGLQQQGHSVIIYTSHCDKSHCFEEVKNGQLKVEVYGDFLPTNFLGRFFIVFATIRQLYLVIQLILQKKVNAYQLIIIDQLSTCIPLLHIFSSATLMFYCHFPDQLLAQRAGLLKKIYRLPFDLIEQFSVSAADTVVVNSNFTKNTFHQTFKYLSNDPDVIYPCVDLSTIEIEDIDKKFFKTVFNEGDRFYLSINRFEKKKDVALAIKAFALSEDQINDNVKLVICGGYDERVAENVEYLKELQSLADEYELSHTTIYYQEIKRVSDLESFKTNNSKIIFLTSISSSLKELLLERTEMLLYTPAYEHFGIVPLEAMKLGKPVLAVNNGGPLETIKSYVAGENESSATGWLKPAVPIQWATAIDESRKILQNGSVNFERNGPLRVKKYFSREAMTQSFEENVEKVIWKEKKYYPWEIFGISFSNFILHMAFIKILPNNPWPFLFMATFMVLYFKNYLWGIYWAFVFALSYPYEEI.

Helical transmembrane passes span Val-64–Ile-84 and Thr-112–Pro-132. 4 N-linked (GlcNAc...) asparagine glycosylation sites follow: Asn-170, Asn-303, Asn-371, and Asn-400. A helical transmembrane segment spans residues Trp-443–Leu-463.

This sequence belongs to the glycosyltransferase group 1 family. Glycosyltransferase 4 subfamily. As to quaternary structure, interacts with ALG1.

The protein resides in the endoplasmic reticulum membrane. It catalyses the reaction a beta-D-Man-(1-&gt;4)-beta-D-GlcNAc-(1-&gt;4)-alpha-D-GlcNAc-diphospho-di-trans,poly-cis-dolichol + GDP-alpha-D-mannose = an alpha-D-Man-(1-&gt;3)-beta-D-Man-(1-&gt;4)-beta-D-GlcNAc-(1-&gt;4)-alpha-D-GlcNAc-diphospho-di-trans,poly-cis-dolichol + GDP + H(+). The catalysed reaction is an alpha-D-Man-(1-&gt;3)-beta-D-Man-(1-&gt;4)-beta-D-GlcNAc-(1-&gt;4)-alpha-D-GlcNAc-diphospho-di-trans,poly-cis-dolichol + GDP-alpha-D-mannose = an alpha-D-Man-(1-&gt;3)-[alpha-D-Man-(1-&gt;6)]-beta-D-Man-(1-&gt;4)-beta-D-GlcNAc-(1-&gt;4)-alpha-D-GlcNAc-diphospho-di-trans,poly-cis-dolichol + GDP + H(+). The protein operates within protein modification; protein glycosylation. Its function is as follows. Mannosylates Man(2)GlcNAc(2)-dolichol diphosphate and Man(1)GlcNAc(2)-dolichol diphosphate to form Man(3)GlcNAc(2)-dolichol diphosphate. The chain is Alpha-1,3/1,6-mannosyltransferase ALG2 (ALG2) from Saccharomyces cerevisiae (strain ATCC 204508 / S288c) (Baker's yeast).